Here is a 298-residue protein sequence, read N- to C-terminus: Adaptation to cold protein C (298 aa).

Interacts with the C-terminal extension of AtcJ. Also interacts with AtcB, but not with AtcA.

With respect to regulation, interaction with AtcJ stabilizes AtcC. Involved in cold adaptation. The protein is Adaptation to cold protein C of Shewanella oneidensis (strain ATCC 700550 / JCM 31522 / CIP 106686 / LMG 19005 / NCIMB 14063 / MR-1).